Reading from the N-terminus, the 396-residue chain is Ribosomal RNA large subunit methyltransferase I (396 aa).

Residues 2–81 (SVRLVLAKGR…ESIDIAFFSR (80 aa)) form the PUA domain.

Belongs to the methyltransferase superfamily. RlmI family.

It is found in the cytoplasm. The catalysed reaction is cytidine(1962) in 23S rRNA + S-adenosyl-L-methionine = 5-methylcytidine(1962) in 23S rRNA + S-adenosyl-L-homocysteine + H(+). Functionally, specifically methylates the cytosine at position 1962 (m5C1962) of 23S rRNA. The chain is Ribosomal RNA large subunit methyltransferase I from Escherichia coli O157:H7.